A 119-amino-acid polypeptide reads, in one-letter code: Integration host factor subunit beta (119 aa).

A disordered region spans residues 93–119 (AGGLADTQPDGDAPDQPQPTLLGLHAM). A compositionally biased stretch (low complexity) spans 97-112 (ADTQPDGDAPDQPQPT).

The protein belongs to the bacterial histone-like protein family. Heterodimer of an alpha and a beta chain.

This protein is one of the two subunits of integration host factor, a specific DNA-binding protein that functions in genetic recombination as well as in transcriptional and translational control. In Bordetella petrii (strain ATCC BAA-461 / DSM 12804 / CCUG 43448), this protein is Integration host factor subunit beta.